The following is a 348-amino-acid chain: Nuclear receptor subfamily 1 group I member 3 (348 aa).

A DNA-binding region (nuclear receptor) is located at residues 8–83; it reads PRSCMVCGDR…AGMKKEMILS (76 aa). The NR C4-type zinc-finger motif lies at 11–31; it reads CMVCGDRATGYHFHALTCEGC. Thr38 bears the Phosphothreonine; by PKC mark. The NR C4-type zinc finger occupies 47 to 71; sequence CPFAGNCKVNKAQRRHCPACRLQKC. Positions 109-348 constitute an NR LBD domain; it reads GQQELVQTLL…MMPLLQEICS (240 aa).

It belongs to the nuclear hormone receptor family. NR1 subfamily. Heterodimer of NR1I3 and RXR. Interacts with PSMC4. Interacts with ECT2. Directly interacts with DNAJC7; this complex may also include HSP90. Interacts with CRY1. Interacts with CRY2 in a ligand-dependent manner. In terms of processing, phosphorylated at Thr-38 by PKC, dephosphorylation of Thr-38 is required for nuclear translocation and activation.

It localises to the nucleus. Its subcellular location is the cytoplasm. The protein resides in the cytoskeleton. Its function is as follows. Binds and transactivates the retinoic acid response elements that control expression of the retinoic acid receptor beta 2 and alcohol dehydrogenase 3 genes. Transactivates both the phenobarbital responsive element module of the human CYP2B6 gene and the CYP3A4 xenobiotic response element. This is Nuclear receptor subfamily 1 group I member 3 (NR1I3) from Callorhinus ursinus (Northern fur seal).